Consider the following 358-residue polypeptide: Phenylalanine--tRNA ligase alpha subunit (358 aa).

E262 is a binding site for Mg(2+).

This sequence belongs to the class-II aminoacyl-tRNA synthetase family. Phe-tRNA synthetase alpha subunit type 1 subfamily. As to quaternary structure, tetramer of two alpha and two beta subunits. The cofactor is Mg(2+).

Its subcellular location is the cytoplasm. The catalysed reaction is tRNA(Phe) + L-phenylalanine + ATP = L-phenylalanyl-tRNA(Phe) + AMP + diphosphate + H(+). This Streptomyces coelicolor (strain ATCC BAA-471 / A3(2) / M145) protein is Phenylalanine--tRNA ligase alpha subunit (pheS).